Here is a 155-residue protein sequence, read N- to C-terminus: Small ribosomal subunit protein uS7 (155 aa).

Belongs to the universal ribosomal protein uS7 family. As to quaternary structure, part of the 30S ribosomal subunit. Contacts proteins S9 and S11.

In terms of biological role, one of the primary rRNA binding proteins, it binds directly to 16S rRNA where it nucleates assembly of the head domain of the 30S subunit. Is located at the subunit interface close to the decoding center, probably blocks exit of the E-site tRNA. The polypeptide is Small ribosomal subunit protein uS7 (Desulforapulum autotrophicum (strain ATCC 43914 / DSM 3382 / VKM B-1955 / HRM2) (Desulfobacterium autotrophicum)).